The sequence spans 200 residues: dTTP/UTP pyrophosphatase (200 aa).

Aspartate 73 (proton acceptor) is an active-site residue.

It belongs to the Maf family. YhdE subfamily. A divalent metal cation serves as cofactor.

The protein localises to the cytoplasm. The catalysed reaction is dTTP + H2O = dTMP + diphosphate + H(+). The enzyme catalyses UTP + H2O = UMP + diphosphate + H(+). Functionally, nucleoside triphosphate pyrophosphatase that hydrolyzes dTTP and UTP. May have a dual role in cell division arrest and in preventing the incorporation of modified nucleotides into cellular nucleic acids. The protein is dTTP/UTP pyrophosphatase of Chromohalobacter salexigens (strain ATCC BAA-138 / DSM 3043 / CIP 106854 / NCIMB 13768 / 1H11).